Consider the following 499-residue polypeptide: Phenylalanine--tRNA ligase alpha subunit (499 aa).

L-phenylalanine is bound by residues threonine 342, 381 to 383 (QID), and phenylalanine 422. Position 424 (glutamate 424) interacts with Mg(2+). Phenylalanine 447 contacts L-phenylalanine.

It belongs to the class-II aminoacyl-tRNA synthetase family. Phe-tRNA synthetase alpha subunit type 2 subfamily. In terms of assembly, tetramer of two alpha and two beta subunits. The cofactor is Mg(2+).

The protein resides in the cytoplasm. It catalyses the reaction tRNA(Phe) + L-phenylalanine + ATP = L-phenylalanyl-tRNA(Phe) + AMP + diphosphate + H(+). This Pyrococcus furiosus (strain ATCC 43587 / DSM 3638 / JCM 8422 / Vc1) protein is Phenylalanine--tRNA ligase alpha subunit.